A 405-amino-acid chain; its full sequence is Acetylornithine aminotransferase (405 aa).

Pyridoxal 5'-phosphate is bound by residues 107-108 (GA) and F140. Position 143 (R143) interacts with N(2)-acetyl-L-ornithine. 225–228 (DEVQ) contributes to the pyridoxal 5'-phosphate binding site. K254 bears the N6-(pyridoxal phosphate)lysine mark. S282 serves as a coordination point for N(2)-acetyl-L-ornithine. A pyridoxal 5'-phosphate-binding site is contributed by T283.

This sequence belongs to the class-III pyridoxal-phosphate-dependent aminotransferase family. ArgD subfamily. As to quaternary structure, homodimer. Pyridoxal 5'-phosphate serves as cofactor.

It is found in the cytoplasm. The catalysed reaction is N(2)-acetyl-L-ornithine + 2-oxoglutarate = N-acetyl-L-glutamate 5-semialdehyde + L-glutamate. It functions in the pathway amino-acid biosynthesis; L-arginine biosynthesis; N(2)-acetyl-L-ornithine from L-glutamate: step 4/4. The chain is Acetylornithine aminotransferase from Shewanella oneidensis (strain ATCC 700550 / JCM 31522 / CIP 106686 / LMG 19005 / NCIMB 14063 / MR-1).